Consider the following 77-residue polypeptide: Acyl carrier protein (77 aa).

A Carrier domain is found at 2–77; that stretch reads SAIDKRVKEI…DAIDYITEHT (76 aa). Ser-37 carries the O-(pantetheine 4'-phosphoryl)serine modification.

This sequence belongs to the acyl carrier protein (ACP) family. In terms of processing, 4'-phosphopantetheine is transferred from CoA to a specific serine of apo-ACP by AcpS. This modification is essential for activity because fatty acids are bound in thioester linkage to the sulfhydryl of the prosthetic group.

It is found in the cytoplasm. Its pathway is lipid metabolism; fatty acid biosynthesis. Its function is as follows. Carrier of the growing fatty acid chain in fatty acid biosynthesis. The sequence is that of Acyl carrier protein from Geobacter metallireducens (strain ATCC 53774 / DSM 7210 / GS-15).